The sequence spans 379 residues: Cytochrome b (379 aa).

The next 4 helical transmembrane spans lie at 33-53, 77-98, 113-133, and 178-198; these read FGSL…FLAM, WLIR…FIHV, WNIG…GYVL, and FFAF…VHLL. 2 residues coordinate heme b: His-83 and His-97. Positions 182 and 196 each coordinate heme b. Residue His-201 coordinates a ubiquinone. The next 4 membrane-spanning stretches (helical) occupy residues 226–246, 288–308, 320–340, and 347–367; these read IKDL…ALFF, LGGV…PLLN, ITQT…WIGG, and FTTI…ILMP.

Belongs to the cytochrome b family. The cytochrome bc1 complex contains 11 subunits: 3 respiratory subunits (MT-CYB, CYC1 and UQCRFS1), 2 core proteins (UQCRC1 and UQCRC2) and 6 low-molecular weight proteins (UQCRH/QCR6, UQCRB/QCR7, UQCRQ/QCR8, UQCR10/QCR9, UQCR11/QCR10 and a cleavage product of UQCRFS1). This cytochrome bc1 complex then forms a dimer. Heme b serves as cofactor.

The protein resides in the mitochondrion inner membrane. Component of the ubiquinol-cytochrome c reductase complex (complex III or cytochrome b-c1 complex) that is part of the mitochondrial respiratory chain. The b-c1 complex mediates electron transfer from ubiquinol to cytochrome c. Contributes to the generation of a proton gradient across the mitochondrial membrane that is then used for ATP synthesis. The protein is Cytochrome b (MT-CYB) of Akodon aerosus (Highland grass mouse).